The chain runs to 411 residues: Serpin A3-5 (411 aa).

The N-terminal stretch at 1 to 24 (MRAERTSFLLALGLLMAGIRSVHC) is a signal peptide. Residues Asn100, Asn180, Asn230, Asn264, and Asn318 are each glycosylated (N-linked (GlcNAc...) asparagine).

The protein belongs to the serpin family. Homodimer.

Its subcellular location is the cytoplasmic vesicle. It localises to the secretory vesicle. It is found in the chromaffin granule. The protein resides in the secreted. Its function is as follows. Serine protease inhibitor. The sequence is that of Serpin A3-5 from Bos taurus (Bovine).